The following is a 162-amino-acid chain: Glutathione peroxidase-like peroxiredoxin 2 (162 aa).

Residue C37 is the Cysteine sulfenic acid (-SOH) intermediate of the active site. An intrachain disulfide couples C37 to C83.

Belongs to the glutathione peroxidase family. As to quaternary structure, monomer.

The protein resides in the cytoplasm. It is found in the nucleus. Its subcellular location is the mitochondrion outer membrane. The protein localises to the mitochondrion inner membrane. The enzyme catalyses a hydroperoxide + [thioredoxin]-dithiol = an alcohol + [thioredoxin]-disulfide + H2O. Its function is as follows. Glutathione peroxidase-like protein that protects cells from phospholipid hydroperoxides and nonphospholipid peroxides during oxidative stress. Plays an important role in the oxidative stress-induced response in the presence of Ca(2+). Has peroxidase activity using preferentially thioredoxin as a reducing power. The redox state of the mitochondrial GPX2 is regulated by TRX1 and TRX2 (cytoplasmic thioredoxin), and by TRX3 (mitochondrial matrix thioredoxin). Involved in sporulation. The polypeptide is Glutathione peroxidase-like peroxiredoxin 2 (Saccharomyces cerevisiae (strain ATCC 204508 / S288c) (Baker's yeast)).